A 156-amino-acid polypeptide reads, in one-letter code: uncharacterized protein (156 aa).

To L.lactis TrpF C-terminal region.

This is an uncharacterized protein from Bacillus subtilis (strain 168).